A 563-amino-acid chain; its full sequence is Ras and Rab interactor-like protein (563 aa).

Positions 181–208 are disordered; sequence GWGTETPQQTEPETGQKYSLAPRKPTPH. Residues 184-196 are compositionally biased toward low complexity; sequence TETPQQTEPETGQ. The region spanning 381–518 is the VPS9 domain; the sequence is AQELRRLRRR…IAHYQPDTGR (138 aa). Residues 539-563 form a disordered region; the sequence is TLHQQAQPTAQANQPFEEPWAIGDP. A compositionally biased stretch (low complexity) spans 542-553; that stretch reads QQAQPTAQANQP.

In terms of assembly, interacts with RAB5A, RAB22A and MUSK. As to expression, detected in thymus and spleen (at protein level). Detected in lung, liver, kidney, spleen, thymus and skeletal muscle.

The protein localises to the cell projection. The protein resides in the ruffle. It localises to the cytoplasmic vesicle. Its function is as follows. Guanine nucleotide exchange factor (GEF) for RAB5A and RAB22A that activates RAB5A and RAB22A by exchanging bound GDP for free GTP. Plays a role in endocytosis via its role in activating Rab family members. In Mus musculus (Mouse), this protein is Ras and Rab interactor-like protein (Rinl).